The following is a 331-amino-acid chain: Anthranilate phosphoribosyltransferase (331 aa).

Residues Gly-78, 81 to 82 (GD), Thr-86, 88 to 91 (NVST), 106 to 114 (KHGNYSVSS), and Ser-118 each bind 5-phospho-alpha-D-ribose 1-diphosphate. Gly-78 contacts anthranilate. Ser-90 lines the Mg(2+) pocket. Asn-109 is a binding site for anthranilate. Arg-164 contacts anthranilate. Residues Asp-222 and Glu-223 each coordinate Mg(2+).

This sequence belongs to the anthranilate phosphoribosyltransferase family. As to quaternary structure, homodimer. It depends on Mg(2+) as a cofactor.

It catalyses the reaction N-(5-phospho-beta-D-ribosyl)anthranilate + diphosphate = 5-phospho-alpha-D-ribose 1-diphosphate + anthranilate. It participates in amino-acid biosynthesis; L-tryptophan biosynthesis; L-tryptophan from chorismate: step 2/5. Catalyzes the transfer of the phosphoribosyl group of 5-phosphorylribose-1-pyrophosphate (PRPP) to anthranilate to yield N-(5'-phosphoribosyl)-anthranilate (PRA). The protein is Anthranilate phosphoribosyltransferase of Haloarcula marismortui (strain ATCC 43049 / DSM 3752 / JCM 8966 / VKM B-1809) (Halobacterium marismortui).